Consider the following 448-residue polypeptide: Inositol hexakisphosphate kinase 2 (448 aa).

Residues 229-231 (ENL) and Asp-242 each bind ATP. Substrate-binding positions include 238-246 (PCVLDLKMG), Lys-244, and 258-265 (KAANQIRK). Asp-405 provides a ligand contact to ATP. Position 408 (His-408) interacts with substrate.

This sequence belongs to the inositol phosphokinase (IPK) family. As to expression, highly expressed in brain and lung, and at slightly lower levels in liver, kidney and testis.

The protein localises to the nucleus. It catalyses the reaction 1D-myo-inositol hexakisphosphate + ATP = 5-diphospho-1D-myo-inositol 1,2,3,4,6-pentakisphosphate + ADP. Its pathway is phospholipid metabolism; phosphatidylinositol metabolism. Converts inositol hexakisphosphate (InsP6) to diphosphoinositol pentakisphosphate (InsP7/PP-InsP5). May play a role in the regulation of Na(+)-dependent phosphate cotransport, possibly via its role in diphosphoinositol pentakisphosphate (InsP7/PP-InsP5) biosynthesis. The sequence is that of Inositol hexakisphosphate kinase 2 (Ip6k2) from Mus musculus (Mouse).